The following is a 156-amino-acid chain: Small ribosomal subunit protein uS7 (156 aa).

It belongs to the universal ribosomal protein uS7 family. As to quaternary structure, part of the 30S ribosomal subunit. Contacts proteins S9 and S11.

Functionally, one of the primary rRNA binding proteins, it binds directly to 16S rRNA where it nucleates assembly of the head domain of the 30S subunit. Is located at the subunit interface close to the decoding center, probably blocks exit of the E-site tRNA. This is Small ribosomal subunit protein uS7 from Rippkaea orientalis (strain PCC 8801 / RF-1) (Cyanothece sp. (strain PCC 8801)).